Consider the following 906-residue polypeptide: Aconitate hydratase A (906 aa).

3 residues coordinate [4Fe-4S] cluster: C443, C509, and C512.

It belongs to the aconitase/IPM isomerase family. In terms of assembly, monomer. [4Fe-4S] cluster is required as a cofactor.

The catalysed reaction is citrate = D-threo-isocitrate. It carries out the reaction (2S,3R)-3-hydroxybutane-1,2,3-tricarboxylate = 2-methyl-cis-aconitate + H2O. The protein operates within carbohydrate metabolism; tricarboxylic acid cycle; isocitrate from oxaloacetate: step 2/2. It participates in organic acid metabolism; propanoate degradation. Its function is as follows. Involved in the catabolism of short chain fatty acids (SCFA) via the tricarboxylic acid (TCA)(acetyl degradation route) and probably via the 2-methylcitrate cycle I (propionate degradation route). Catalyzes the reversible isomerization of citrate to isocitrate via cis-aconitate. Could catalyze the hydration of 2-methyl-cis-aconitate to yield (2R,3S)-2-methylisocitrate. The apo form of AcnA functions as a RNA-binding regulatory protein. This chain is Aconitate hydratase A, found in Bradyrhizobium diazoefficiens (strain JCM 10833 / BCRC 13528 / IAM 13628 / NBRC 14792 / USDA 110).